Consider the following 310-residue polypeptide: ADP-L-glycero-D-manno-heptose-6-epimerase (310 aa).

NADP(+) is bound by residues 10 to 11 (FI), 31 to 32 (DN), Lys38, Lys53, 75 to 79 (EGACS), and Asn92. Residue Tyr140 is the Proton acceptor of the active site. Residue Lys144 participates in NADP(+) binding. Asn169 contacts substrate. Val170 and Lys178 together coordinate NADP(+). Lys178 acts as the Proton acceptor in catalysis. Substrate contacts are provided by residues Ser180, His187, 201–204 (FAGS), Arg209, and Tyr272.

It belongs to the NAD(P)-dependent epimerase/dehydratase family. HldD subfamily. In terms of assembly, homopentamer. Requires NADP(+) as cofactor.

It catalyses the reaction ADP-D-glycero-beta-D-manno-heptose = ADP-L-glycero-beta-D-manno-heptose. Its pathway is nucleotide-sugar biosynthesis; ADP-L-glycero-beta-D-manno-heptose biosynthesis; ADP-L-glycero-beta-D-manno-heptose from D-glycero-beta-D-manno-heptose 7-phosphate: step 4/4. Its function is as follows. Catalyzes the interconversion between ADP-D-glycero-beta-D-manno-heptose and ADP-L-glycero-beta-D-manno-heptose via an epimerization at carbon 6 of the heptose. The polypeptide is ADP-L-glycero-D-manno-heptose-6-epimerase (Yersinia pseudotuberculosis serotype O:1b (strain IP 31758)).